The chain runs to 166 residues: Endoribonuclease YbeY (166 aa).

Residues His125, His129, and His135 each contribute to the Zn(2+) site.

This sequence belongs to the endoribonuclease YbeY family. Requires Zn(2+) as cofactor.

It is found in the cytoplasm. Functionally, single strand-specific metallo-endoribonuclease involved in late-stage 70S ribosome quality control and in maturation of the 3' terminus of the 16S rRNA. This is Endoribonuclease YbeY from Alkalilimnicola ehrlichii (strain ATCC BAA-1101 / DSM 17681 / MLHE-1).